Here is an 882-residue protein sequence, read N- to C-terminus: Ubiquitin carboxyl-terminal hydrolase 4 (882 aa).

Residues 182–308 (YDSSLLLIDV…WVSKKGACET (127 aa)) enclose the Rhodanese domain. Positions 382 to 399 (KAKSSSTSSVTSSSPAPS) are enriched in low complexity. The segment at 382 to 411 (KAKSSSTSSVTSSSPAPSQLVRPQTSSMPP) is disordered. Residues 402–411 (VRPQTSSMPP) are compositionally biased toward polar residues. The region spanning 519-879 (VGLENMGNSC…NAYVLFYHRV (361 aa)) is the USP domain. C528 (nucleophile) is an active-site residue. H836 functions as the Proton acceptor in the catalytic mechanism.

The protein belongs to the peptidase C19 family.

The protein resides in the cytoplasm. It localises to the late endosome membrane. It catalyses the reaction Thiol-dependent hydrolysis of ester, thioester, amide, peptide and isopeptide bonds formed by the C-terminal Gly of ubiquitin (a 76-residue protein attached to proteins as an intracellular targeting signal).. Its activity is regulated as follows. RFU1 is an inhibitor of deubiquitination activity. In terms of biological role, ubiquitin thioesterase that acts at the late endosome/prevacuolar compartment to recover ubiquitin from ubiquitinated membrane proteins en route to the vacuole. Also removes ubiquitin from soluble proteins targeted to proteasomes. Is essential to maintain a normal level of free ubiquitin. Required for promoting coordination of DNA replication and avoids DNA overreplication. In Vanderwaltozyma polyspora (strain ATCC 22028 / DSM 70294 / BCRC 21397 / CBS 2163 / NBRC 10782 / NRRL Y-8283 / UCD 57-17) (Kluyveromyces polysporus), this protein is Ubiquitin carboxyl-terminal hydrolase 4 (DOA4).